Consider the following 264-residue polypeptide: SPRY domain-containing SOCS box protein 2 (264 aa).

A compositionally biased stretch (polar residues) spans 1–19; the sequence is MGQTALARGSSSTPTSQAL. The disordered stretch occupies residues 1-34; that stretch reads MGQTALARGSSSTPTSQALYSDFSPPEGLEELLS. A B30.2/SPRY domain is found at 26-221; that stretch reads PEGLEELLSA…VRIRYMGERR (196 aa). The 43-residue stretch at 222-264 folds into the SOCS box domain; the sequence is VEEPQSLLHLSRLCVRHALGDTRLGQISTLPLPPAMKRYLLYK.

The protein belongs to the SPSB family. In terms of assembly, component of the probable ECS(SPSB2) E3 ubiquitin-protein ligase complex which contains CUL5, RNF7/RBX2, Elongin BC complex and SPSB2. Interacts with CUL5, RNF7, ELOB and ELOC. Interacts with MET. Interacts (via B30.2/SPRY domain) with PAWR; this interaction occurs in association with the Elongin BC complex. Interacts with NOS2.

Its subcellular location is the cytoplasm. The protein resides in the cytosol. Its pathway is protein modification; protein ubiquitination. Its function is as follows. Substrate recognition component of a SCF-like ECS (Elongin BC-CUL2/5-SOCS-box protein) E3 ubiquitin-protein ligase complex which mediates the ubiquitination and subsequent proteasomal degradation of target proteins. Negatively regulates nitric oxide (NO) production and limits cellular toxicity in activated macrophages by mediating the ubiquitination and proteasomal degradation of NOS2. Acts as a bridge which links NOS2 with the ECS E3 ubiquitin ligase complex components ELOC and CUL5. The chain is SPRY domain-containing SOCS box protein 2 (Spsb2) from Mus musculus (Mouse).